We begin with the raw amino-acid sequence, 206 residues long: Ribosomal RNA small subunit methyltransferase G (206 aa).

S-adenosyl-L-methionine contacts are provided by residues Gly74, Leu79, 125–126 (VE), and Arg140.

This sequence belongs to the methyltransferase superfamily. RNA methyltransferase RsmG family.

Its subcellular location is the cytoplasm. The enzyme catalyses guanosine(527) in 16S rRNA + S-adenosyl-L-methionine = N(7)-methylguanosine(527) in 16S rRNA + S-adenosyl-L-homocysteine. In terms of biological role, specifically methylates the N7 position of guanine in position 527 of 16S rRNA. The sequence is that of Ribosomal RNA small subunit methyltransferase G from Shewanella sp. (strain MR-7).